We begin with the raw amino-acid sequence, 311 residues long: Nudix hydrolase 9 (311 aa).

The 168-residue stretch at 131-298 (SSPLGNGAVI…GFALYELMLQ (168 aa)) folds into the Nudix hydrolase domain. The Nudix box motif lies at 192–213 (LNKKVTQEMFDSIICEVVEETG). Mg(2+) is bound by residues glutamate 207 and glutamate 211.

It belongs to the Nudix hydrolase family. Mg(2+) serves as cofactor. The cofactor is Mn(2+). Expressed in roots, stems and leaves.

Its function is as follows. Probably mediates the hydrolysis of some nucleoside diphosphate derivatives. In Arabidopsis thaliana (Mouse-ear cress), this protein is Nudix hydrolase 9 (NUDT9).